Reading from the N-terminus, the 357-residue chain is Cobalt-precorrin-5B C(1)-methyltransferase (357 aa).

It belongs to the CbiD family.

It catalyses the reaction Co-precorrin-5B + S-adenosyl-L-methionine = Co-precorrin-6A + S-adenosyl-L-homocysteine. The protein operates within cofactor biosynthesis; adenosylcobalamin biosynthesis; cob(II)yrinate a,c-diamide from sirohydrochlorin (anaerobic route): step 6/10. Catalyzes the methylation of C-1 in cobalt-precorrin-5B to form cobalt-precorrin-6A. The polypeptide is Cobalt-precorrin-5B C(1)-methyltransferase (Gloeobacter violaceus (strain ATCC 29082 / PCC 7421)).